The primary structure comprises 477 residues: P3 protein (477 aa).

The tract at residues 1 to 21 (MVLMQDKGSSQQWPGLGGEGG) is disordered. The next 8 membrane-spanning stretches (helical) occupy residues 225–245 (PMLLGLLGQFLVMPLYAFLMA), 253–273 (ALALGLIITCSSPGGGGSYLF), 281–301 (VTLAISMTFLSTVAATGFLPL), 320–340 (ISKILGTLLFIAIPIAVGVLI), 361–381 (VLLLGGLFLAYRMGVFILAGI), 383–403 (LPIVLVGITVPLVGLLVGYCL), 417–437 (VSIEVGVQNSLLALAMLQLSL), and 450–470 (FIVALSGTSEMLALVIGHFIY).

It belongs to the bile acid:sodium symporter (BASS) (TC 2.A.28) family.

It is found in the membrane. The ubiquitous expression and the conservation of the sequence in distant animal species suggest that the gene codes for a protein with housekeeping functions. The polypeptide is P3 protein (SLC10A3) (Homo sapiens (Human)).